A 226-amino-acid chain; its full sequence is N-(5'-phosphoribosyl)anthranilate isomerase (226 aa).

This sequence belongs to the TrpF family.

It catalyses the reaction N-(5-phospho-beta-D-ribosyl)anthranilate = 1-(2-carboxyphenylamino)-1-deoxy-D-ribulose 5-phosphate. The protein operates within amino-acid biosynthesis; L-tryptophan biosynthesis; L-tryptophan from chorismate: step 3/5. The chain is N-(5'-phosphoribosyl)anthranilate isomerase (TRP1) from Saccharomyces kudriavzevii (strain ATCC MYA-4449 / AS 2.2408 / CBS 8840 / NBRC 1802 / NCYC 2889) (Yeast).